The primary structure comprises 340 residues: Proline-rich transmembrane protein 2 (340 aa).

The interval 1–261 (MAASSSEISE…AGPGVEGGEG (261 aa)) is disordered. Topologically, residues 1–268 (MAASSSEISE…GEGTQKPRDY (268 aa)) are cytoplasmic. Over residues 9–18 (SEMKGVEESP) the composition is skewed to basic and acidic residues. Ser-28 is modified (phosphoserine). Thr-74 carries the post-translational modification Phosphothreonine. 2 stretches are compositionally biased toward pro residues: residues 131–155 (PPEP…PKPA) and 197–207 (APEPHSPPSKK). The residue at position 238 (Ser-238) is a Phosphoserine. The residue at position 240 (Arg-240) is an Omega-N-methylarginine. Residues Ser-248 and Ser-249 each carry the phosphoserine modification. The segment at residues 269–289 (IILAILSCFCPMWPVNIVAFA) is an intramembrane region (helical). The Cytoplasmic portion of the chain corresponds to 290-317 (YAVMSRNSLQQGDVDGAQRLGRVAKLLS). Residues 318–338 (IVALVGGVLIIIASCVINLGV) traverse the membrane as a helical segment. Topologically, residues 339 to 340 (YK) are extracellular.

Belongs to the CD225/Dispanin family. Component of the outer core of AMPAR complex. AMPAR complex consists of an inner core made of 4 pore-forming GluA/GRIA proteins (GRIA1, GRIA2, GRIA3 and GRIA4) and 4 major auxiliary subunits arranged in a twofold symmetry. One of the two pairs of distinct binding sites is occupied either by CNIH2, CNIH3 or CACNG2, CACNG3. The other harbors CACNG2, CACNG3, CACNG4, CACNG8 or GSG1L. This inner core of AMPAR complex is complemented by outer core constituents binding directly to the GluA/GRIA proteins at sites distinct from the interaction sites of the inner core constituents. Outer core constituents include at least PRRT1, PRRT2, CKAMP44/SHISA9, FRRS1L and NRN1. The proteins of the inner and outer core serve as a platform for other, more peripherally associated AMPAR constituents. Alone or in combination, these auxiliary subunits control the gating and pharmacology of the AMPAR complex and profoundly impact their biogenesis and protein processing. Interacts with intersectin 1/ITSN1. Interacts with SNARE complex components, including SNAP25, STX1A, SYT1 and SYT2; this interaction may inhibit SNARE complex formation.

Its subcellular location is the cell membrane. It is found in the presynaptic cell membrane. It localises to the synapse. The protein resides in the cell projection. The protein localises to the axon. Its subcellular location is the cytoplasmic vesicle. It is found in the secretory vesicle. It localises to the synaptic vesicle membrane. The protein resides in the postsynaptic density membrane. The protein localises to the dendritic spine. In terms of biological role, as a component of the outer core of AMPAR complex, may be involved in synaptic transmission in the central nervous system. In hippocampal neurons, in presynaptic terminals, plays an important role in the final steps of neurotransmitter release, possibly by regulating Ca(2+)-sensing. In the cerebellum, may inhibit SNARE complex formation and down-regulate short-term facilitation. This chain is Proline-rich transmembrane protein 2 (PRRT2), found in Homo sapiens (Human).